Reading from the N-terminus, the 122-residue chain is Large ribosomal subunit protein uL14 (122 aa).

This sequence belongs to the universal ribosomal protein uL14 family. As to quaternary structure, part of the 50S ribosomal subunit. Forms a cluster with proteins L3 and L19. In the 70S ribosome, L14 and L19 interact and together make contacts with the 16S rRNA in bridges B5 and B8.

Binds to 23S rRNA. Forms part of two intersubunit bridges in the 70S ribosome. The sequence is that of Large ribosomal subunit protein uL14 from Salinibacter ruber (strain DSM 13855 / M31).